A 267-amino-acid polypeptide reads, in one-letter code: 4-hydroxy-tetrahydrodipicolinate reductase (267 aa).

Residues 12–17, 100–102, and 126–129 contribute to the NAD(+) site; these read GPRGRM, GTT, and APNF. Residue His156 is the Proton donor/acceptor of the active site. His157 is a binding site for (S)-2,3,4,5-tetrahydrodipicolinate. Catalysis depends on Lys160, which acts as the Proton donor. Residue 166 to 167 coordinates (S)-2,3,4,5-tetrahydrodipicolinate; the sequence is GT.

The protein belongs to the DapB family.

Its subcellular location is the cytoplasm. It carries out the reaction (S)-2,3,4,5-tetrahydrodipicolinate + NAD(+) + H2O = (2S,4S)-4-hydroxy-2,3,4,5-tetrahydrodipicolinate + NADH + H(+). It catalyses the reaction (S)-2,3,4,5-tetrahydrodipicolinate + NADP(+) + H2O = (2S,4S)-4-hydroxy-2,3,4,5-tetrahydrodipicolinate + NADPH + H(+). Its pathway is amino-acid biosynthesis; L-lysine biosynthesis via DAP pathway; (S)-tetrahydrodipicolinate from L-aspartate: step 4/4. Its function is as follows. Catalyzes the conversion of 4-hydroxy-tetrahydrodipicolinate (HTPA) to tetrahydrodipicolinate. This is 4-hydroxy-tetrahydrodipicolinate reductase from Bacillus subtilis (strain 168).